The chain runs to 1042 residues: Diacylglycerol lipase-alpha (1042 aa).

The Cytoplasmic portion of the chain corresponds to 1-22 (MPGIVVFRRRWSVGSDDLVLPA). Residues 23–43 (IFLFLLHTTWFVILSVVLFGL) traverse the membrane as a helical segment. The Extracellular portion of the chain corresponds to 44 to 60 (VYNPHEACSLNLVDHGR). A helical membrane pass occupies residues 61–81 (GYLGILLSCMIAEMAIIWLSM). The Cytoplasmic portion of the chain corresponds to 82–101 (RGGILYTEPRDSMQYVLYVR). The helical transmembrane segment at 102 to 122 (LAILVIEFIYAIVGIVWLTQY) threads the bilayer. The Extracellular portion of the chain corresponds to 123–136 (YTSCNDLTAKNVTL). Asn133 carries an N-linked (GlcNAc...) asparagine glycan. The chain crosses the membrane as a helical span at residues 137–157 (GMVVCNWVVILSVCITVLCVF). At 158–1042 (DPTGRTFVKL…KQDELVISAR (885 aa)) the chain is on the cytoplasmic side. Active-site charge relay system residues include Ser472 and Asp524. A phosphoserine mark is found at Ser727, Ser729, Ser732, Ser743, Ser782, Ser784, Ser806, Ser808, Ser833, Ser847, and Ser952. A disordered region spans residues 846–903 (LSKHSQDTQPLEAALGSGGVTPERPPSAAANDEEEEVGGGGGGPASRGELALHNGRLG). Positions 1014–1042 (LAADKIRTSTPTGHGASPAKQDELVISAR) are disordered. Phosphothreonine is present on Thr1023.

It belongs to the AB hydrolase superfamily. Lipase family. In terms of assembly, interacts (via C-terminal) with CAMK2A; leading to the phosphorylation and inhibition of DAGLA enzymatic activity. Interacts (via PPXXF motif) with HOMER1 and HOMER2; this interaction is required for DAGLA membrane localization. The cofactor is Ca(2+). Post-translationally, phosphorylated at Ser-782 and Ser-808 by CAMK2A; phosphorylation by CAMK2A inhibits diacylglycerol lipase activity. Highly expressed in brain and pancreas.

Its subcellular location is the cell membrane. The protein resides in the postsynaptic density membrane. The protein localises to the early endosome membrane. It is found in the cell projection. It localises to the dendritic spine membrane. It catalyses the reaction a 1,2-diacyl-sn-glycerol + H2O = a 2-acylglycerol + a fatty acid + H(+). The enzyme catalyses 1-octadecanoyl-2-(5Z,8Z,11Z,14Z-eicosatetraenoyl)-sn-glycerol + H2O = 2-(5Z,8Z,11Z,14Z-eicosatetraenoyl)-glycerol + octadecanoate + H(+). The catalysed reaction is 1,2-di-(9Z-octadecenoyl)-sn-glycerol + H2O = 2-(9Z-octadecenoyl)-glycerol + (9Z)-octadecenoate + H(+). It carries out the reaction 1-(9Z-octadecenoyl)-2-(5Z,8Z,11Z,14Z-eicosatetraenoyl)-sn-glycerol + H2O = 2-(5Z,8Z,11Z,14Z-eicosatetraenoyl)-glycerol + (9Z)-octadecenoate + H(+). It catalyses the reaction 1-(9Z-octadecenoyl)-2-octadecanoyl-sn-glycerol + H2O = 2-octadecanoylglycerol + (9Z)-octadecenoate + H(+). The enzyme catalyses 1-(9Z-octadecenoyl)-2-(9Z,12Z-octadecadienoyl)-sn-glycerol + H2O = 2-(9Z,12Z-octadecadienoyl)-glycerol + (9Z)-octadecenoate + H(+). The catalysed reaction is 1-(9Z-octadecenoyl)-2-O-(5Z,8Z,11Z,14Z-eicosatetraenyl)-sn-glycerol + H2O = 2-O-(5Z,8Z,11Z,14Z)-eicosatetraenylglycerol + (9Z)-octadecenoate + H(+). Inhibited by 1,2,3-triazole urea covalent inhibitors KT172, DH376 and DO34. Inhibited by p-hydroxy-mercuri-benzoate and HgCl(2), but not to PMSF. Also inhibited by RHC80267. Diacylglycerol lipase activity is inhibited by the phosphorylation of Ser-782 and Ser-808 by CAMK2A. Serine hydrolase that hydrolyzes arachidonic acid-esterified diacylglycerols (DAGs) to produce the principal endocannabinoid, 2-arachidonoylglycerol (2-AG). Preferentially hydrolyzes sn-1 fatty acids from diacylglycerols (DAG) that contain arachidonic acid (AA) esterified at the sn-2 position to biosynthesize 2-AG. Has negligible activity against other lipids including monoacylglycerols and phospholipids. Plays a key role in regulating 2-AG signaling in the central nervous system (CNS). Regulates 2-AG involved in retrograde suppression at central synapses. Supports axonal growth during development and adult neurogenesis. Plays a role for eCB signaling in the physiological regulation of anxiety and depressive behaviors. Also regulates neuroinflammatory responses in the brain, in particular, LPS-induced microglial activation. This chain is Diacylglycerol lipase-alpha (DAGLA), found in Homo sapiens (Human).